The primary structure comprises 602 residues: UvrABC system protein C (602 aa).

One can recognise a GIY-YIG domain in the interval 17–94; that stretch reads KTSGCYKMYS…IKKYKPTYNI (78 aa). The region spanning 199 to 234 is the UVR domain; the sequence is SKLLNDIEIKMKEVIMKENFEAAIKLKETKKSLIEI.

It belongs to the UvrC family. Interacts with UvrB in an incision complex.

Its subcellular location is the cytoplasm. In terms of biological role, the UvrABC repair system catalyzes the recognition and processing of DNA lesions. UvrC both incises the 5' and 3' sides of the lesion. The N-terminal half is responsible for the 3' incision and the C-terminal half is responsible for the 5' incision. The sequence is that of UvrABC system protein C from Borrelia recurrentis (strain A1).